Consider the following 244-residue polypeptide: 3-deoxy-manno-octulosonate cytidylyltransferase (244 aa).

It belongs to the KdsB family.

It localises to the cytoplasm. The enzyme catalyses 3-deoxy-alpha-D-manno-oct-2-ulosonate + CTP = CMP-3-deoxy-beta-D-manno-octulosonate + diphosphate. The protein operates within nucleotide-sugar biosynthesis; CMP-3-deoxy-D-manno-octulosonate biosynthesis; CMP-3-deoxy-D-manno-octulosonate from 3-deoxy-D-manno-octulosonate and CTP: step 1/1. It functions in the pathway bacterial outer membrane biogenesis; lipopolysaccharide biosynthesis. Activates KDO (a required 8-carbon sugar) for incorporation into bacterial lipopolysaccharide in Gram-negative bacteria. The polypeptide is 3-deoxy-manno-octulosonate cytidylyltransferase (Flavobacterium johnsoniae (strain ATCC 17061 / DSM 2064 / JCM 8514 / BCRC 14874 / CCUG 350202 / NBRC 14942 / NCIMB 11054 / UW101) (Cytophaga johnsonae)).